The following is a 112-amino-acid chain: UPF0145 protein Acid_4599 (112 aa).

This sequence belongs to the UPF0145 family.

This chain is UPF0145 protein Acid_4599, found in Solibacter usitatus (strain Ellin6076).